Reading from the N-terminus, the 216-residue chain is Uracil phosphoribosyltransferase (216 aa).

5-phospho-alpha-D-ribose 1-diphosphate is bound by residues Arg85, Arg110, and 135–143 (DPMVATGYS). Uracil contacts are provided by residues Ile200 and 205-207 (GDA). Residue Asp206 coordinates 5-phospho-alpha-D-ribose 1-diphosphate.

The protein belongs to the UPRTase family. Requires Mg(2+) as cofactor.

The enzyme catalyses UMP + diphosphate = 5-phospho-alpha-D-ribose 1-diphosphate + uracil. It functions in the pathway pyrimidine metabolism; UMP biosynthesis via salvage pathway; UMP from uracil: step 1/1. Allosterically activated by GTP. Catalyzes the conversion of uracil and 5-phospho-alpha-D-ribose 1-diphosphate (PRPP) to UMP and diphosphate. The protein is Uracil phosphoribosyltransferase of Burkholderia ambifaria (strain MC40-6).